A 245-amino-acid polypeptide reads, in one-letter code: 4-hydroxy-tetrahydrodipicolinate reductase (245 aa).

Residues 7 to 12, D33, 75 to 77, and 102 to 105 contribute to the NAD(+) site; these read GAKGKV, GTT, and APNF. The active-site Proton donor/acceptor is the H132. Position 133 (H133) interacts with (S)-2,3,4,5-tetrahydrodipicolinate. Residue K136 is the Proton donor of the active site. 142–143 serves as a coordination point for (S)-2,3,4,5-tetrahydrodipicolinate; the sequence is GT.

Belongs to the DapB family.

The protein resides in the cytoplasm. The catalysed reaction is (S)-2,3,4,5-tetrahydrodipicolinate + NAD(+) + H2O = (2S,4S)-4-hydroxy-2,3,4,5-tetrahydrodipicolinate + NADH + H(+). It catalyses the reaction (S)-2,3,4,5-tetrahydrodipicolinate + NADP(+) + H2O = (2S,4S)-4-hydroxy-2,3,4,5-tetrahydrodipicolinate + NADPH + H(+). It functions in the pathway amino-acid biosynthesis; L-lysine biosynthesis via DAP pathway; (S)-tetrahydrodipicolinate from L-aspartate: step 4/4. Functionally, catalyzes the conversion of 4-hydroxy-tetrahydrodipicolinate (HTPA) to tetrahydrodipicolinate. The polypeptide is 4-hydroxy-tetrahydrodipicolinate reductase (Mycolicibacterium paratuberculosis (strain ATCC BAA-968 / K-10) (Mycobacterium paratuberculosis)).